Here is a 218-residue protein sequence, read N- to C-terminus: Ribose-5-phosphate isomerase A (218 aa).

Residues 28-31, 81-84, and 94-97 each bind substrate; these read TGST, DGAD, and KGGG. Catalysis depends on glutamate 103, which acts as the Proton acceptor. Lysine 121 contacts substrate.

It belongs to the ribose 5-phosphate isomerase family. Homodimer.

It carries out the reaction aldehydo-D-ribose 5-phosphate = D-ribulose 5-phosphate. The protein operates within carbohydrate degradation; pentose phosphate pathway; D-ribose 5-phosphate from D-ribulose 5-phosphate (non-oxidative stage): step 1/1. Its function is as follows. Catalyzes the reversible conversion of ribose-5-phosphate to ribulose 5-phosphate. This chain is Ribose-5-phosphate isomerase A, found in Yersinia pseudotuberculosis serotype IB (strain PB1/+).